Here is a 261-residue protein sequence, read N- to C-terminus: Transcription repressor OFP15 (261 aa).

The tract at residues 1–28 (MKLPFLNKNHSTSSYSSNSSSSSWPWPS) is disordered. The segment covering 11-28 (STSSYSSNSSSSSWPWPS) has biased composition (low complexity). In terms of domain architecture, OVATE spans 112–172 (FSLESDDPYS…FAAFVDLLMN (61 aa)).

Interacts with BLH1 and BLH3. In terms of tissue distribution, expressed in roots, cauline leaves, shoots, flower buds and siliques.

It localises to the nucleus. Functionally, transcriptional repressor that regulates multiple aspects of plant growth and development through the regulation of BEL1-LIKE (BLH) and KNOX TALE (KNAT) homeodomain transcription factors. The polypeptide is Transcription repressor OFP15 (OFP15) (Arabidopsis thaliana (Mouse-ear cress)).